A 347-amino-acid polypeptide reads, in one-letter code: Two pore potassium channel a (347 aa).

A compositionally biased stretch (polar residues) spans 1 to 11 (MDDNSIQQSLL). A disordered region spans residues 1 to 49 (MDDNSIQQSLLADNPNVLQRKPSEGVNRFRRCRSTPSTDPLQGPPEKGS). Over 1–65 (MDDNSIQQSL…LFKEMRPSFR (65 aa)) the chain is Cytoplasmic. The chain crosses the membrane as a helical span at residues 66–86 (LVGLLLFIYLLVGVLAFYAVM). Positions 99–118 (DALYFCVVTMTTVGYGDLVP) form an intramembrane region, pore-forming. The helical transmembrane segment at 125-145 (LLACAFVFMGMAVVALFVSKV) threads the bilayer. Residues 146 to 183 (ADYLVEKQEVLFFKALHTNLKGGETKMLRAIETNRIKY) lie on the Cytoplasmic side of the membrane. Residues 184-204 (KFYTNALLLVLSIISGTVFLW) form a helical membrane-spanning segment. An intramembrane region (pore-forming) is located at residues 213–232 (DSFYCVCATITTLGYGDKSF). A helical membrane pass occupies residues 239–259 (VFAVFWIITSTIIMAQFFMYL). Residues 260–347 (AEIYTERRQK…YDLTLAQSAQ (88 aa)) lie on the Cytoplasmic side of the membrane. EF-hand domains are found at residues 276 to 311 (LTRK…ELGK) and 315 to 347 (EEIS…QSAQ). The Ca(2+) site is built by Asp-289, Asp-291, Asp-293, Gln-295, Glu-300, Asp-328, Asp-330, Ser-332, Thr-334, and Asp-339.

The protein belongs to the two pore domain potassium channel (TC 1.A.1.7) family. Homodimer.

It is found in the vacuole membrane. Functionally, highly selective inward-rectifying potassium channel that is specifically located in the tonoplast of large vacuoles. Functions independently of the voltage difference across the membrane. The protein is Two pore potassium channel a (TPKA) of Oryza sativa subsp. japonica (Rice).